Consider the following 477-residue polypeptide: UDP-N-acetylmuramate--L-alanine ligase (477 aa).

122–128 (GTHGKTT) serves as a coordination point for ATP.

It belongs to the MurCDEF family.

The protein localises to the cytoplasm. The enzyme catalyses UDP-N-acetyl-alpha-D-muramate + L-alanine + ATP = UDP-N-acetyl-alpha-D-muramoyl-L-alanine + ADP + phosphate + H(+). It functions in the pathway cell wall biogenesis; peptidoglycan biosynthesis. Its function is as follows. Cell wall formation. The protein is UDP-N-acetylmuramate--L-alanine ligase of Xylella fastidiosa (strain M12).